The following is a 547-amino-acid chain: Kelch repeat and BTB domain-containing protein 2 (547 aa).

The BTB domain maps to 20-89 (CDVIITIGDG…LYNRHISSMN (70 aa)). Kelch repeat units lie at residues 295–342 (DIII…VIDD), 343–389 (TIYA…VLDQ), and 391–454 (IYII…SHKD).

In terms of assembly, interacts (via BTB domain) with host CUL3.

The protein localises to the host cytoplasm. Functionally, probable substrate-specific adapter of CUL3-containing E3 ubiquitin-protein ligases which mediate the ubiquitination and subsequent proteasomal degradation of host target proteins. This is Kelch repeat and BTB domain-containing protein 2 (KBTB2) from Bos taurus (Bovine).